We begin with the raw amino-acid sequence, 108 residues long: Tubulin-specific chaperone A (108 aa).

At alanine 2 the chain carries N-acetylalanine.

It belongs to the TBCA family. In terms of assembly, supercomplex made of cofactors A to E. Cofactors A and D function by capturing and stabilizing tubulin in a quasi-native conformation. Cofactor E binds to the cofactor D-tubulin complex; interaction with cofactor C then causes the release of tubulin polypeptides that are committed to the native state.

It localises to the cytoplasm. Its subcellular location is the cytoskeleton. Functionally, tubulin-folding protein; involved in the early step of the tubulin folding pathway. The polypeptide is Tubulin-specific chaperone A (TBCA) (Oryctolagus cuniculus (Rabbit)).